The primary structure comprises 473 residues: Ribulose bisphosphate carboxylase large chain (473 aa).

Positions 1 to 2 (MS) are excised as a propeptide. An N-acetylproline modification is found at proline 3. Residue lysine 14 is modified to N6,N6,N6-trimethyllysine. Positions 123 and 173 each coordinate substrate. Residue lysine 175 is the Proton acceptor of the active site. Lysine 177 contributes to the substrate binding site. Residues lysine 201, aspartate 203, and glutamate 204 each contribute to the Mg(2+) site. Lysine 201 is subject to N6-carboxylysine. Histidine 294 acts as the Proton acceptor in catalysis. Substrate is bound by residues arginine 295, histidine 327, and serine 379.

It belongs to the RuBisCO large chain family. Type I subfamily. As to quaternary structure, heterohexadecamer of 8 large chains and 8 small chains; disulfide-linked. The disulfide link is formed within the large subunit homodimers. Requires Mg(2+) as cofactor. In terms of processing, the disulfide bond which can form in the large chain dimeric partners within the hexadecamer appears to be associated with oxidative stress and protein turnover.

The protein resides in the plastid. It is found in the chloroplast. The catalysed reaction is 2 (2R)-3-phosphoglycerate + 2 H(+) = D-ribulose 1,5-bisphosphate + CO2 + H2O. The enzyme catalyses D-ribulose 1,5-bisphosphate + O2 = 2-phosphoglycolate + (2R)-3-phosphoglycerate + 2 H(+). RuBisCO catalyzes two reactions: the carboxylation of D-ribulose 1,5-bisphosphate, the primary event in carbon dioxide fixation, as well as the oxidative fragmentation of the pentose substrate in the photorespiration process. Both reactions occur simultaneously and in competition at the same active site. The sequence is that of Ribulose bisphosphate carboxylase large chain from Cajanus cajan (Pigeon pea).